The chain runs to 111 residues: MSTEIDQPFVVEEILTIIKEAVEISLQNTVYQHKQVPQWTQSIIDHSLKKISELNNKSYKYIVNCLIFQKTGAGFHTASSCLWDSANDGSCSYRWENKSMHCIISVFGCKI.

It belongs to the dynein light chain Tctex-type family.

The protein resides in the cytoplasm. Its subcellular location is the cytoskeleton. Functionally, acts as a non-catalytic accessory component of a dynein complex. The polypeptide is Dynein light chain Tctex-type (dlcA) (Dictyostelium discoideum (Social amoeba)).